A 214-amino-acid polypeptide reads, in one-letter code: tRNA (guanine-N(7)-)-methyltransferase (214 aa).

Glu45, Glu70, Asp97, and Asp119 together coordinate S-adenosyl-L-methionine. Residue Asp119 is part of the active site. Residues Lys123, Asp155, and 192-195 (TEYE) contribute to the substrate site.

The protein belongs to the class I-like SAM-binding methyltransferase superfamily. TrmB family.

The enzyme catalyses guanosine(46) in tRNA + S-adenosyl-L-methionine = N(7)-methylguanosine(46) in tRNA + S-adenosyl-L-homocysteine. The protein operates within tRNA modification; N(7)-methylguanine-tRNA biosynthesis. Catalyzes the formation of N(7)-methylguanine at position 46 (m7G46) in tRNA. In Clostridioides difficile (strain 630) (Peptoclostridium difficile), this protein is tRNA (guanine-N(7)-)-methyltransferase.